The sequence spans 386 residues: 3-ketoacyl-CoA thiolase (386 aa).

C91 serves as the catalytic Acyl-thioester intermediate. Active-site proton acceptor residues include H342 and C372.

It belongs to the thiolase-like superfamily. Thiolase family. In terms of assembly, heterotetramer of two alpha chains (FadB) and two beta chains (FadA).

It localises to the cytoplasm. The enzyme catalyses an acyl-CoA + acetyl-CoA = a 3-oxoacyl-CoA + CoA. The protein operates within lipid metabolism; fatty acid beta-oxidation. Functionally, catalyzes the final step of fatty acid oxidation in which acetyl-CoA is released and the CoA ester of a fatty acid two carbons shorter is formed. The polypeptide is 3-ketoacyl-CoA thiolase (Colwellia psychrerythraea (strain 34H / ATCC BAA-681) (Vibrio psychroerythus)).